The following is a 1863-amino-acid chain: E3 ubiquitin-protein ligase ubr3 (1863 aa).

A UBR-type zinc finger spans residues 80 to 151; that stretch reads TLCGLVWTAN…ESGFCNRHRL (72 aa). Disordered stretches follow at residues 302 to 330, 970 to 995, and 1128 to 1152; these read LDDS…SSTK, PEVE…SATF, and IPPK…RARE. 2 stretches are compositionally biased toward basic and acidic residues: residues 971–984 and 1134–1152; these read EVER…ERET and SPGD…RARE. The RING-type; degenerate zinc-finger motif lies at 1270–1328; the sequence is DSSCLQSVSIGWDGGVYVQTCGHTLHIDCHKSYMESLRNDQVLQGISVDKGEFTCPLCR.

The protein belongs to the E3 ubiquitin-protein ligase UBR1-like family.

It catalyses the reaction S-ubiquitinyl-[E2 ubiquitin-conjugating enzyme]-L-cysteine + [acceptor protein]-L-lysine = [E2 ubiquitin-conjugating enzyme]-L-cysteine + N(6)-ubiquitinyl-[acceptor protein]-L-lysine.. It functions in the pathway protein modification; protein ubiquitination. E3 ubiquitin-protein ligase which is a component of the N-end rule pathway. Recognizes and binds to proteins bearing specific N-terminal residues, leading to their ubiquitination and subsequent degradation. Positively regulates hedgehog/shh-signaling pathways that function in eye development, neuronal specification and somite development. Activation of shh up-regulates transcription of ubr3, which in turn promotes hedgehog/shh signaling possibly by controlling negative regulators such as Kif7. The protein is E3 ubiquitin-protein ligase ubr3 of Danio rerio (Zebrafish).